A 381-amino-acid chain; its full sequence is Heterogeneous nuclear rnp K-like protein 2 (381 aa).

Positions 1 to 34 (MSQFFEAATPVAIPTNNTNGGSSDAGSAATGGAP) are disordered. A compositionally biased stretch (low complexity) spans 15–33 (TNNTNGGSSDAGSAATGGA). KH domains are found at residues 43–107 (TINH…IGDI), 156–221 (IGYV…LIEI), and 258–326 (NTRI…ESML). The interval 344–381 (LEAAEGDATVVTERSDSASFLEEKEEPQENHDNKEEQS) is disordered. Phosphoserine occurs at positions 358, 360, and 362. The span at 370–381 (PQENHDNKEEQS) shows a compositional bias: basic and acidic residues.

It belongs to the HEK2 family. In terms of assembly, binds RNA. In terms of processing, phosphorylated by the plasma membrane-Anchored casein kinase YCK1. Phosphorylation at its C-terminus reduces its RNA-binding capacity.

It localises to the cytoplasm. The protein localises to the P-body. It is found in the nucleus. Its subcellular location is the chromosome. The protein resides in the telomere. Its function is as follows. RNA-binding protein involved in the correct localization of transcripts in the cell. RNA localization is a widespread mechanism for achieving localized protein synthesis. Required for the asymmetric localization to the daughter cell nucleus of the ASH1 transcript, coding for a specific repressor of transcription. Overexpression inhibits translation of the ASH1 transcript. Involved in the stability of transcripts, like the MTL1 mRNA. Involved in structural and functional organization of telomeric chromatin and regulates silencing at the HMR locus. The chain is Heterogeneous nuclear rnp K-like protein 2 (HEK2) from Saccharomyces cerevisiae (strain YJM789) (Baker's yeast).